The chain runs to 256 residues: MSILEINNLHVSIEGKEILKGVNLTLKTGEVAAIMGPNGTGKSTLSAAIMGNPNYEVTQGQILLDGVNILDLEVDERARLGLFLAMQYPSEIPGITNAEFMRAAMNAGKADEDKISVRDFITKLDEKMALLGMKEEMAERYLNEGFSGGEKKRNEILQLLMLEPKFALLDEIDSGLDIDALKVVSKGVNEMRGKDFGAMIITHYQRLLNYITPDLVHVMMDGRIVLSGDAALATRLEKEGYAGIAQDLGIEYKEES.

The 243-residue stretch at 4–246 (LEINNLHVSI…EKEGYAGIAQ (243 aa)) folds into the ABC transporter domain. 36–43 (GPNGTGKS) contributes to the ATP binding site.

It belongs to the ABC transporter superfamily. Ycf16 family.

It localises to the cell membrane. The protein is Probable ABC transporter ATP-binding protein SPy_0285/M5005_Spy0242 of Streptococcus pyogenes serotype M1.